The sequence spans 317 residues: Melanocyte-stimulating hormone receptor (317 aa).

At 1–37 (MPVLGSQRRLLGSLNCTPPATFSLTLAPNRTGPQCLE) the chain is on the extracellular side. The N-linked (GlcNAc...) asparagine glycan is linked to N29. A helical membrane pass occupies residues 38-63 (VSIPDGLFLSLGLVSLVENVLVVAAI). Residues 64 to 72 (AKNRNLHSP) are Cytoplasmic-facing. The helical transmembrane segment at 73–93 (MYYFICCLAVSDLLVSVSNVL) threads the bilayer. The Extracellular segment spans residues 94 to 118 (ETAVMLLLEAGALAARAAVVQQLDN). Residues 119 to 140 (VIDVLICGSMVSSLCFLGAIAM) form a helical membrane-spanning segment. The Cytoplasmic portion of the chain corresponds to 141-163 (DRYISIFYALRYHSVVTLPRAWR). The helical transmembrane segment at 164-183 (IIAAIWVASILTSLLFITYY) threads the bilayer. Residues 184 to 191 (NHTVVLLC) are Extracellular-facing. The chain crosses the membrane as a helical span at residues 192 to 211 (LVGFFIAMLALMAILYVHML). The Cytoplasmic segment spans residues 212–240 (ARACQHARDIARLQKRQHPIHQGFGLKGA). A helical membrane pass occupies residues 241 to 266 (ATLTILLGVFFLCWGPFFLHLSLIVL). The Extracellular segment spans residues 267–279 (CPQHPTCGCIFKN). A helical transmembrane segment spans residues 280–300 (FNLFLALIICNAIVDPLIYAF). The Cytoplasmic portion of the chain corresponds to 301–317 (RSQELRKTLQEVLQCSW). C315 carries S-palmitoyl cysteine lipidation.

The protein belongs to the G-protein coupled receptor 1 family. As to quaternary structure, interacts with MGRN1, but does not undergo MGRN1-mediated ubiquitination; this interaction competes with GNAS-binding and thus inhibits agonist-induced cAMP production. Interacts with OPN3; the interaction results in a decrease in MC1R-mediated cAMP signaling and ultimately a decrease in melanin production in melanocytes.

It localises to the cell membrane. Functionally, receptor for MSH (alpha, beta and gamma) and ACTH. The activity of this receptor is mediated by G proteins which activate adenylate cyclase. Mediates melanogenesis, the production of eumelanin (black/brown) and phaeomelanin (red/yellow), via regulation of cAMP signaling in melanocytes. The protein is Melanocyte-stimulating hormone receptor (MC1R) of Alces alces alces (European moose).